A 118-amino-acid polypeptide reads, in one-letter code: Holo-[acyl-carrier-protein] synthase (118 aa).

Mg(2+) contacts are provided by Asp-8 and Glu-58.

It belongs to the P-Pant transferase superfamily. AcpS family. Mg(2+) serves as cofactor.

The protein resides in the cytoplasm. The catalysed reaction is apo-[ACP] + CoA = holo-[ACP] + adenosine 3',5'-bisphosphate + H(+). Functionally, transfers the 4'-phosphopantetheine moiety from coenzyme A to a Ser of acyl-carrier-protein. This Lactobacillus helveticus (strain DPC 4571) protein is Holo-[acyl-carrier-protein] synthase.